Consider the following 210-residue polypeptide: Prohead protease (210 aa).

The propeptide occupies 1–23 (MTQAAIDYNKLKSAPVHLDAYIK). Residues histidine 76, serine 122, and glutamate 148 contribute to the active site. Residues 167-210 (SMNGHDYTEWRKSFTAISSKAVPAQERNLSELEKLAIALGYVKE) constitute a propeptide that is removed on maturation.

Belongs to the HK97 prohead protease protein family. In terms of processing, cleaves itself autocatalytically to yield the mature form of the protease.

It localises to the virion. In terms of biological role, serine protease involved in capsid assembly and maturation. Cleaves the major capsid protein, the decoration protein, the portal protein to yield mature procapsids competent for DNA packaging. Acts as a trigger for assembly of the capsid protein. The sequence is that of Prohead protease from Escherichia coli (Enterobacteria phage T5).